Consider the following 470-residue polypeptide: 6-phospho-beta-galactosidase (470 aa).

D-galactose 6-phosphate contacts are provided by Gln19, His116, Asn159, Glu160, and Asn297. Residue Glu160 is the Proton donor of the active site. Glu375 (nucleophile) is an active-site residue. Residues Ser430, Trp431, Lys437, and Tyr439 each coordinate D-galactose 6-phosphate.

It belongs to the glycosyl hydrolase 1 family.

The catalysed reaction is a 6-phospho-beta-D-galactoside + H2O = D-galactose 6-phosphate + an alcohol. Its pathway is carbohydrate metabolism; lactose degradation; D-galactose 6-phosphate and beta-D-glucose from lactose 6-phosphate: step 1/1. This Staphylococcus epidermidis (strain ATCC 35984 / DSM 28319 / BCRC 17069 / CCUG 31568 / BM 3577 / RP62A) protein is 6-phospho-beta-galactosidase.